The chain runs to 968 residues: RNA polymerase-associated protein RapA (968 aa).

The Helicase ATP-binding domain occupies 164-334 (DVGRRHAPRV…FARLRLLDPN (171 aa)). 177–184 (DEVGLGKT) contacts ATP. Residues 280-283 (DEAH) carry the DEAH box motif. In terms of domain architecture, Helicase C-terminal spans 490 to 644 (RVEWLMGYLT…TCPTGRAIYD (155 aa)).

Belongs to the SNF2/RAD54 helicase family. RapA subfamily. As to quaternary structure, interacts with the RNAP. Has a higher affinity for the core RNAP than for the holoenzyme. Its ATPase activity is stimulated by binding to RNAP.

Its function is as follows. Transcription regulator that activates transcription by stimulating RNA polymerase (RNAP) recycling in case of stress conditions such as supercoiled DNA or high salt concentrations. Probably acts by releasing the RNAP, when it is trapped or immobilized on tightly supercoiled DNA. Does not activate transcription on linear DNA. Probably not involved in DNA repair. The sequence is that of RNA polymerase-associated protein RapA from Salmonella arizonae (strain ATCC BAA-731 / CDC346-86 / RSK2980).